Here is a 342-residue protein sequence, read N- to C-terminus: Tetraacyldisaccharide 4'-kinase (342 aa).

Position 68 to 75 (68 to 75 (TVGGTGKT)) interacts with ATP.

The protein belongs to the LpxK family.

It catalyses the reaction a lipid A disaccharide + ATP = a lipid IVA + ADP + H(+). The protein operates within glycolipid biosynthesis; lipid IV(A) biosynthesis; lipid IV(A) from (3R)-3-hydroxytetradecanoyl-[acyl-carrier-protein] and UDP-N-acetyl-alpha-D-glucosamine: step 6/6. Transfers the gamma-phosphate of ATP to the 4'-position of a tetraacyldisaccharide 1-phosphate intermediate (termed DS-1-P) to form tetraacyldisaccharide 1,4'-bis-phosphate (lipid IVA). The chain is Tetraacyldisaccharide 4'-kinase from Burkholderia vietnamiensis (strain G4 / LMG 22486) (Burkholderia cepacia (strain R1808)).